The sequence spans 1089 residues: Platelet-derived growth factor receptor alpha (1089 aa).

Residues 1–24 form the signal peptide; the sequence is MGTSHQVFLVLSCLLTGPGLISCQ. Ig-like C2-type domains follow at residues 25–113, 117–201, 202–306, 319–410, and 414–517; these read LLLP…SEIE, IYIY…FKTS, EFNV…KRVT, PTFG…FELS, and PASI…LKLV. Over 25–528 the chain is Extracellular; sequence LLLPSILPNE…PTLRSELTVA (504 aa). Asparagine 42, asparagine 76, asparagine 89, asparagine 103, and asparagine 179 each carry an N-linked (GlcNAc...) asparagine glycan. A disulfide bridge links cysteine 49 with cysteine 100. 2 disulfides stabilise this stretch: cysteine 150-cysteine 189 and cysteine 235-cysteine 290. Asparagine 353, asparagine 359, asparagine 458, asparagine 468, and asparagine 506 each carry an N-linked (GlcNAc...) asparagine glycan. Cysteine 435 and cysteine 501 are oxidised to a cystine. A helical membrane pass occupies residues 529–549; that stretch reads AAVLVLLVIVIVSLIVLVVIW. Residues 550–1089 lie on the Cytoplasmic side of the membrane; sequence KQKPRYEIRW…SSDLVEDSFL (540 aa). A phosphotyrosine; by autocatalysis mark is found at tyrosine 572 and tyrosine 574. Positions 593–954 constitute a Protein kinase domain; that stretch reads LVLGRILGSG…HLSEIVENLL (362 aa). Residues 599–607 and lysine 627 contribute to the ATP site; that span reads LGSGAFGKV. Phosphotyrosine; by autocatalysis occurs at positions 720, 731, 742, 754, 762, and 768. Aspartate 818 (proton acceptor) is an active-site residue. A phosphotyrosine; by autocatalysis mark is found at tyrosine 849, tyrosine 988, and tyrosine 1018. The disordered stretch occupies residues 1018 to 1089; it reads YIIPLPDIDP…SSDLVEDSFL (72 aa). The segment covering 1041 to 1059 has biased composition (polar residues); it reads SSQTSEESAIETGSSSSTF. Residues 1065–1089 are compositionally biased toward acidic residues; it reads ETIEDIDMMDDIGIDSSDLVEDSFL.

This sequence belongs to the protein kinase superfamily. Tyr protein kinase family. CSF-1/PDGF receptor subfamily. Interacts with homodimeric PDGFA, PDGFB and PDGFC, and with heterodimers formed by PDGFA and PDGFB. Monomer in the absence of bound ligand. Interaction with dimeric PDGFA, PDGFB and/or PDGFC leads to receptor dimerization, where both PDGFRA homodimers and heterodimers with PDGFRB are observed. Interacts (tyrosine phosphorylated) with SHB (via SH2 domain). Interacts (tyrosine phosphorylated) with SHF (via SH2 domain). Interacts (tyrosine phosphorylated) with SRC (via SH2 domain). Interacts (tyrosine phosphorylated) with PIK3R1. Interacts (tyrosine phosphorylated) with PLCG1 (via SH2 domain). Interacts (tyrosine phosphorylated) with CRK, GRB2 and GRB7. Interacts with CD248; this interaction promotes PDGF receptor signaling pathway. Post-translationally, ubiquitinated, leading to its internalization and degradation. Autophosphorylated on tyrosine residues upon ligand binding. Autophosphorylation occurs in trans, i.e. one subunit of the dimeric receptor phosphorylates tyrosine residues on the other subunit. Phosphorylation at Tyr-731 and Tyr-742 is important for interaction with PIK3R1. Phosphorylation at Tyr-720 and Tyr-754 is important for interaction with PTPN11. Phosphorylation at Tyr-762 is important for interaction with CRK. Phosphorylation at Tyr-572 and Tyr-574 is important for interaction with SRC and SRC family members. Phosphorylation at Tyr-988 and Tyr-1018 is important for interaction with PLCG1. In terms of tissue distribution, focally expressed in cortical interstitial cells and highly expressed in the interstitium of the papillary region. Also expressed by adventitial cells in arterial vessels. Up-regulated in areas of renal fibrosis. In mice with unilateral ureteral obstruction, expression in cortical interstitial cells becomes prominent at day 4 which increases progressively until day 14.

The protein resides in the cell membrane. The protein localises to the cell projection. It is found in the cilium. It localises to the golgi apparatus. It catalyses the reaction L-tyrosyl-[protein] + ATP = O-phospho-L-tyrosyl-[protein] + ADP + H(+). Present in an inactive conformation in the absence of bound ligand. Binding of PDGFA and/or PDGFB leads to dimerization and activation by autophosphorylation on tyrosine residues. Inhibited by imatinib, nilotinib and sorafenib. Its function is as follows. Tyrosine-protein kinase that acts as a cell-surface receptor for PDGFA, PDGFB and PDGFC and plays an essential role in the regulation of embryonic development, cell proliferation, survival and chemotaxis. Depending on the context, promotes or inhibits cell proliferation and cell migration. Plays an important role in the differentiation of bone marrow-derived mesenchymal stem cells. Required for normal skeleton development and cephalic closure during embryonic development. Required for normal development of the mucosa lining the gastrointestinal tract, and for recruitment of mesenchymal cells and normal development of intestinal villi. Plays a role in cell migration and chemotaxis in wound healing. Plays a role in platelet activation, secretion of agonists from platelet granules, and in thrombin-induced platelet aggregation. Binding of its cognate ligands - homodimeric PDGFA, homodimeric PDGFB, heterodimers formed by PDGFA and PDGFB or homodimeric PDGFC -leads to the activation of several signaling cascades; the response depends on the nature of the bound ligand and is modulated by the formation of heterodimers between PDGFRA and PDGFRB. Phosphorylates PIK3R1, PLCG1, and PTPN11. Activation of PLCG1 leads to the production of the cellular signaling molecules diacylglycerol and inositol 1,4,5-trisphosphate, mobilization of cytosolic Ca(2+) and the activation of protein kinase C. Phosphorylates PIK3R1, the regulatory subunit of phosphatidylinositol 3-kinase, and thereby mediates activation of the AKT1 signaling pathway. Mediates activation of HRAS and of the MAP kinases MAPK1/ERK2 and/or MAPK3/ERK1. Promotes activation of STAT family members STAT1, STAT3 and STAT5A and/or STAT5B. Receptor signaling is down-regulated by protein phosphatases that dephosphorylate the receptor and its down-stream effectors, and by rapid internalization of the activated receptor. The polypeptide is Platelet-derived growth factor receptor alpha (Pdgfra) (Mus musculus (Mouse)).